A 1403-amino-acid chain; its full sequence is DNA-directed RNA polymerase subunit beta' (1403 aa).

The Zn(2+) site is built by cysteine 71, cysteine 73, cysteine 86, and cysteine 89. The Mg(2+) site is built by aspartate 462, aspartate 464, and aspartate 466. Zn(2+) is bound by residues cysteine 811, cysteine 885, cysteine 892, and cysteine 895.

The protein belongs to the RNA polymerase beta' chain family. As to quaternary structure, the RNAP catalytic core consists of 2 alpha, 1 beta, 1 beta' and 1 omega subunit. When a sigma factor is associated with the core the holoenzyme is formed, which can initiate transcription. It depends on Mg(2+) as a cofactor. Zn(2+) is required as a cofactor.

The catalysed reaction is RNA(n) + a ribonucleoside 5'-triphosphate = RNA(n+1) + diphosphate. Functionally, DNA-dependent RNA polymerase catalyzes the transcription of DNA into RNA using the four ribonucleoside triphosphates as substrates. The polypeptide is DNA-directed RNA polymerase subunit beta' (Bartonella bacilliformis (strain ATCC 35685 / KC583 / Herrer 020/F12,63)).